A 358-amino-acid chain; its full sequence is Endo-1,4-beta-xylanase B (358 aa).

Positions 1-17 (MRFSASLLLALTGSAAA) are cleaved as a signal peptide. Positions 40–352 (QGLDAAMKAA…KAAYNAFLRG (313 aa)) constitute a GH10 domain. N-linked (GlcNAc...) asparagine glycosylation is present at Asn136. Glu166 functions as the Proton donor in the catalytic mechanism. The active-site Nucleophile is Glu274.

It belongs to the glycosyl hydrolase 10 (cellulase F) family.

The protein localises to the secreted. It catalyses the reaction Endohydrolysis of (1-&gt;4)-beta-D-xylosidic linkages in xylans.. Its pathway is glycan degradation; xylan degradation. With respect to regulation, partial inhibition of activity is detected in the presence of Ag(+), Cu2(+) and SDS. Like most fungal xylanases, activity is completely inhibited by Hg(2+) since Hg(2+) could interact with tryptophan residues and oxidize the indole ring. Beta-mercaptoethanol enhances the enzymatic activity by counteracting the oxidation effects of the S-S linkage between cysteine residues. Its function is as follows. Endo-1,4-beta-xylanase involved in the hydrolysis of xylan, a major structural heterogeneous polysaccharide found in plant biomass representing the second most abundant polysaccharide in the biosphere, after cellulose. Is more active on soluble wheat arabinoxylan (defined as 100%) than on birchwood xylan (75.4%) and beechwood xylan (70.8%), and less active on insoluble wheat arabinoxylan (17.4%). Xylose is the major hydrolysis product of XynB. This is Endo-1,4-beta-xylanase B from Humicola insolens (Soft-rot fungus).